A 482-amino-acid chain; its full sequence is Protein nucleotidyltransferase YdiU (482 aa).

ATP contacts are provided by glycine 88, glycine 90, arginine 91, lysine 111, aspartate 123, glycine 124, arginine 174, and arginine 181. Catalysis depends on aspartate 250, which acts as the Proton acceptor. Mg(2+) is bound by residues asparagine 251 and aspartate 260. ATP is bound at residue aspartate 260.

The protein belongs to the SELO family. Mg(2+) serves as cofactor. Requires Mn(2+) as cofactor.

The enzyme catalyses L-seryl-[protein] + ATP = 3-O-(5'-adenylyl)-L-seryl-[protein] + diphosphate. It carries out the reaction L-threonyl-[protein] + ATP = 3-O-(5'-adenylyl)-L-threonyl-[protein] + diphosphate. The catalysed reaction is L-tyrosyl-[protein] + ATP = O-(5'-adenylyl)-L-tyrosyl-[protein] + diphosphate. It catalyses the reaction L-histidyl-[protein] + UTP = N(tele)-(5'-uridylyl)-L-histidyl-[protein] + diphosphate. The enzyme catalyses L-seryl-[protein] + UTP = O-(5'-uridylyl)-L-seryl-[protein] + diphosphate. It carries out the reaction L-tyrosyl-[protein] + UTP = O-(5'-uridylyl)-L-tyrosyl-[protein] + diphosphate. Functionally, nucleotidyltransferase involved in the post-translational modification of proteins. It can catalyze the addition of adenosine monophosphate (AMP) or uridine monophosphate (UMP) to a protein, resulting in modifications known as AMPylation and UMPylation. This Cronobacter sakazakii (strain ATCC BAA-894) (Enterobacter sakazakii) protein is Protein nucleotidyltransferase YdiU.